A 196-amino-acid polypeptide reads, in one-letter code: DnaA initiator-associating protein DiaA (196 aa).

Residues 34-196 form the SIS domain; the sequence is MVQSLLNGNK…DNTLFPHQDD (163 aa).

Belongs to the SIS family. DiaA subfamily. As to quaternary structure, homotetramer; dimer of dimers.

Its function is as follows. Required for the timely initiation of chromosomal replication via direct interactions with the DnaA initiator protein. The polypeptide is DnaA initiator-associating protein DiaA (Photorhabdus laumondii subsp. laumondii (strain DSM 15139 / CIP 105565 / TT01) (Photorhabdus luminescens subsp. laumondii)).